A 482-amino-acid polypeptide reads, in one-letter code: Dual specificity protein phosphatase 10 (482 aa).

In terms of domain architecture, Rhodanese spans 168–285; that stretch reads PSQGPVIIDC…FKQNHENLCD (118 aa). An interaction with MAP kinases region spans residues 199 to 215; that stretch reads KISRRRLQQGKITVLDL. The region spanning 321–464 is the Tyrosine-protein phosphatase domain; that stretch reads ELTPILPFLF…LLEFEEDLNN (144 aa). The Phosphocysteine intermediate role is filled by C408.

This sequence belongs to the protein-tyrosine phosphatase family. Non-receptor class dual specificity subfamily. As to quaternary structure, monomer. Interacts with MAPK14. In terms of tissue distribution, expressed in keratinocytes (at protein level). Detected in brain.

The protein resides in the cytoplasm. It localises to the nucleus. The catalysed reaction is O-phospho-L-tyrosyl-[protein] + H2O = L-tyrosyl-[protein] + phosphate. The enzyme catalyses O-phospho-L-seryl-[protein] + H2O = L-seryl-[protein] + phosphate. It catalyses the reaction O-phospho-L-threonyl-[protein] + H2O = L-threonyl-[protein] + phosphate. Protein phosphatase involved in the inactivation of MAP kinases. Has a specificity for the MAPK11/MAPK12/MAPK13/MAPK14 subfamily. It preferably dephosphorylates p38. The sequence is that of Dual specificity protein phosphatase 10 (DUSP10) from Homo sapiens (Human).